Here is a 711-residue protein sequence, read N- to C-terminus: GDNF-inducible zinc finger protein 1 (711 aa).

Residues 31–103 enclose the BTB domain; that stretch reads CDVTVSVEYQ…VYTAKVQVEE (73 aa). The span at 153 to 168 shows a compositional bias: low complexity; sequence SGSQVSAAPAPRASVA. 2 disordered regions span residues 153–220 and 243–312; these read SGSQ…PKIR and RLRE…EGEK. 3 stretches are compositionally biased toward basic and acidic residues: residues 197 to 212, 243 to 252, and 265 to 277; these read PPKKSKDKLDKKKEVV, RLREQQKTAE, and SPDRVGTEMEQVS. The span at 298–309 shows a compositional bias: acidic residues; the sequence is EEEEEEEEEDEE. C2H2-type zinc fingers lie at residues 317-340, 348-371, 377-400, 407-429, 435-457, 463-485, 491-513, 519-541, 547-569, and 575-597; these read FKCSICEKAFLYEKSFLKHSKHRH, YRCDTCGQTFANRCNLKSHQRHVH, FPCELCGKKFKRKKDVKRHVLQVH, HRCGQCGKGLSSKTALRLHERTH, YGCTECGARFSQPSALKTHMRIH, FVCDECGARFTQNHMLIYHKRCH, FMCETCGKSFASKEYLKHHNRIH, FKCEVCFRTFAQRNSLYQHIKVH, YCCDQCGKQFTQLNALQRHRRIH, and FMCNACGRTFTDKSTLRRHTSIH. Ser613 is subject to Phosphoserine.

This sequence belongs to the krueppel C2H2-type zinc-finger protein family. In terms of assembly, interacts with NCL. Expressed in adult brain, heart, skeletal muscle, kidney and liver. Also detected in fetal brain and kidney, and at lower levels in fetal lung and liver.

It localises to the cytoplasm. The protein localises to the nucleus. The protein resides in the nucleoplasm. It is found in the nucleolus. In terms of biological role, transcriptional repressor that binds the GZF1 responsive element (GRE) (consensus: 5'-TGCGCN[TG][CA]TATA-3'). May be regulating VSX2/HOX10 expression. This is GDNF-inducible zinc finger protein 1 from Homo sapiens (Human).